The sequence spans 237 residues: Probable S-methyl-5'-thioinosine phosphorylase (237 aa).

Phosphate contacts are provided by residues Thr12 and 54-55; that span reads RH. Met187 contacts substrate. Residue Thr188 coordinates phosphate. A substrate-binding site is contributed by 211-213; the sequence is NWA.

It belongs to the PNP/MTAP phosphorylase family. MTAP subfamily. As to quaternary structure, homotrimer.

It catalyses the reaction S-methyl-5'-thioinosine + phosphate = 5-(methylsulfanyl)-alpha-D-ribose 1-phosphate + hypoxanthine. Its pathway is purine metabolism; purine nucleoside salvage. Functionally, catalyzes the reversible phosphorylation of S-methyl-5'-thioinosine (MTI) to hypoxanthine and 5-methylthioribose-1-phosphate. Involved in the breakdown of S-methyl-5'-thioadenosine (MTA), a major by-product of polyamine biosynthesis. Catabolism of (MTA) occurs via deamination to MTI and phosphorolysis to hypoxanthine. This chain is Probable S-methyl-5'-thioinosine phosphorylase, found in Xylella fastidiosa (strain 9a5c).